The sequence spans 140 residues: Large ribosomal subunit protein uL11 (140 aa).

It belongs to the universal ribosomal protein uL11 family. Part of the ribosomal stalk of the 50S ribosomal subunit. Interacts with L10 and the large rRNA to form the base of the stalk. L10 forms an elongated spine to which L12 dimers bind in a sequential fashion forming a multimeric L10(L12)X complex. In terms of processing, one or more lysine residues are methylated.

Forms part of the ribosomal stalk which helps the ribosome interact with GTP-bound translation factors. This chain is Large ribosomal subunit protein uL11, found in Oleidesulfovibrio alaskensis (strain ATCC BAA-1058 / DSM 17464 / G20) (Desulfovibrio alaskensis).